The primary structure comprises 109 residues: CRISPR-associated endoribonuclease Cas2 (109 aa).

Mg(2+) is bound at residue aspartate 8.

Belongs to the CRISPR-associated endoribonuclease Cas2 protein family. Homodimer, forms a heterotetramer with a Cas1 homodimer. Mg(2+) is required as a cofactor.

Its function is as follows. CRISPR (clustered regularly interspaced short palindromic repeat), is an adaptive immune system that provides protection against mobile genetic elements (viruses, transposable elements and conjugative plasmids). CRISPR clusters contain sequences complementary to antecedent mobile elements and target invading nucleic acids. CRISPR clusters are transcribed and processed into CRISPR RNA (crRNA). Functions as a ssRNA-specific endoribonuclease. Involved in the integration of spacer DNA into the CRISPR cassette. In Streptococcus mutans serotype c (strain ATCC 700610 / UA159), this protein is CRISPR-associated endoribonuclease Cas2.